A 924-amino-acid chain; its full sequence is Mediator of RNA polymerase II transcription subunit 16 (924 aa).

Belongs to the Mediator complex subunit 16 family. In terms of assembly, component of the Mediator complex.

Its subcellular location is the nucleus. Its function is as follows. Component of the Mediator complex, a coactivator involved in the regulated transcription of nearly all RNA polymerase II-dependent genes. Mediator functions as a bridge to convey information from gene-specific regulatory proteins to the basal RNA polymerase II transcription machinery. Mediator is recruited to promoters by direct interactions with regulatory proteins and serves as a scaffold for the assembly of a functional preinitiation complex with RNA polymerase II and the general transcription factors. The polypeptide is Mediator of RNA polymerase II transcription subunit 16 (SIN4) (Yarrowia lipolytica (strain CLIB 122 / E 150) (Yeast)).